Here is a 396-residue protein sequence, read N- to C-terminus: Cystathionine beta-lyase (396 aa).

N6-(pyridoxal phosphate)lysine is present on K214.

Belongs to the trans-sulfuration enzymes family. Homodimer. The cofactor is pyridoxal 5'-phosphate.

It localises to the cytoplasm. The catalysed reaction is L,L-cystathionine + H2O = L-homocysteine + pyruvate + NH4(+). The enzyme catalyses an S-substituted L-cysteine + H2O = a thiol + pyruvate + NH4(+). It participates in amino-acid biosynthesis; L-methionine biosynthesis via de novo pathway; L-homocysteine from L-cystathionine: step 1/1. Catalyzes the cleavage of cystathionine to homocysteine, pyruvate and ammonia during methionine biosynthesis. Also has cytotoxic activity toward osteogenic, osteosarcoma and tracheal cells, in vitro. The chemical basis for cell toxicity might be the formation and subsequent transfer of sulfane-sulfur to proteins, derived via beta-cystathionase cleavage of L-cystine. The polypeptide is Cystathionine beta-lyase (metC) (Bordetella avium).